The primary structure comprises 316 residues: tRNA methyltransferase 10 homolog B (316 aa).

The stretch at 73-97 (EKIVAAKKSKRKQEKERRKANRAEN) forms a coiled coil. Positions 77–98 (AAKKSKRKQEKERRKANRAENP) are disordered. Residues 113-310 (TKDKLLEAKH…KGVSSGKGYI (198 aa)) enclose the SAM-dependent MTase TRM10-type domain.

It belongs to the class IV-like SAM-binding methyltransferase superfamily. TRM10 family.

It carries out the reaction guanosine(9) in tRNA + S-adenosyl-L-methionine = N(1)-methylguanosine(9) in tRNA + S-adenosyl-L-homocysteine + H(+). In terms of biological role, S-adenosyl-L-methionine-dependent guanine N(1)-methyltransferase that catalyzes the formation of N(1)-methylguanine at position 9 (m1G9) in tRNAs. Probably not able to catalyze formation of N(1)-methyladenine at position 9 (m1A9) in tRNAs. The protein is tRNA methyltransferase 10 homolog B (TRMT10B) of Homo sapiens (Human).